Reading from the N-terminus, the 137-residue chain is MANAASGMAVEDECKLKFLELKAKRNYRFIIFRIDGQQVVVEKLGSPQENYDDFTNYLPPNECRYAVYDFDFTTAENIQKSKIFFIAWSPDSSRVRMKMVYASSKDRFKRELDGIQVELQATDPSEMSLDIIKSRAL.

Position 6 is a phosphoserine (S6). Residues 7 to 137 enclose the ADF-H domain; it reads GMAVEDECKL…SLDIIKSRAL (131 aa).

Belongs to the actin-binding proteins ADF family. Specifically expressed in pollen.

It is found in the cytoplasm. The protein localises to the cytoskeleton. Actin-depolymerizing protein. Severs actin filaments (F-actin) and binds to actin monomers. The polypeptide is Actin-depolymerizing factor 12 (Arabidopsis thaliana (Mouse-ear cress)).